The sequence spans 504 residues: Cytochrome P450 2K1 (504 aa).

A heme-binding site is contributed by C447.

Belongs to the cytochrome P450 family. Requires heme as cofactor.

It is found in the endoplasmic reticulum membrane. Its subcellular location is the microsome membrane. The enzyme catalyses an organic molecule + reduced [NADPH--hemoprotein reductase] + O2 = an alcohol + oxidized [NADPH--hemoprotein reductase] + H2O + H(+). The chain is Cytochrome P450 2K1 (cyp2k1) from Oncorhynchus mykiss (Rainbow trout).